A 202-amino-acid chain; its full sequence is MADS-box transcription factor 33 (202 aa).

The 61-residue stretch at 1–61 (MVRGKVQMRR…GKLHELATNG (61 aa)) folds into the MADS-box domain. Positions 87-177 (QQVAEQGIFL…QEKVKEQQKL (91 aa)) constitute a K-box domain.

In terms of tissue distribution, expressed in seedling roots.

The protein localises to the nucleus. Probable transcription factor. The sequence is that of MADS-box transcription factor 33 (MADS33) from Oryza sativa subsp. japonica (Rice).